The primary structure comprises 443 residues: ATP-dependent protease ATPase subunit HslU (443 aa).

Residues Ile-18, 60 to 65, Asp-256, Glu-321, and Arg-393 contribute to the ATP site; that span reads GVGKTE.

The protein belongs to the ClpX chaperone family. HslU subfamily. In terms of assembly, a double ring-shaped homohexamer of HslV is capped on each side by a ring-shaped HslU homohexamer. The assembly of the HslU/HslV complex is dependent on binding of ATP.

It is found in the cytoplasm. ATPase subunit of a proteasome-like degradation complex; this subunit has chaperone activity. The binding of ATP and its subsequent hydrolysis by HslU are essential for unfolding of protein substrates subsequently hydrolyzed by HslV. HslU recognizes the N-terminal part of its protein substrates and unfolds these before they are guided to HslV for hydrolysis. This is ATP-dependent protease ATPase subunit HslU from Shigella boydii serotype 18 (strain CDC 3083-94 / BS512).